We begin with the raw amino-acid sequence, 270 residues long: Formamidopyrimidine-DNA glycosylase (270 aa).

Pro2 (schiff-base intermediate with DNA) is an active-site residue. The Proton donor role is filled by Glu3. Lys58 serves as the catalytic Proton donor; for beta-elimination activity. Residues His91, Arg109, and Arg151 each coordinate DNA. The FPG-type zinc finger occupies 236–270; that stretch reads QVYGKTGQQCPSCETPLKAVKLAARASVYCPECQS. Arg260 serves as the catalytic Proton donor; for delta-elimination activity.

This sequence belongs to the FPG family. Monomer. The cofactor is Zn(2+).

The catalysed reaction is Hydrolysis of DNA containing ring-opened 7-methylguanine residues, releasing 2,6-diamino-4-hydroxy-5-(N-methyl)formamidopyrimidine.. It catalyses the reaction 2'-deoxyribonucleotide-(2'-deoxyribose 5'-phosphate)-2'-deoxyribonucleotide-DNA = a 3'-end 2'-deoxyribonucleotide-(2,3-dehydro-2,3-deoxyribose 5'-phosphate)-DNA + a 5'-end 5'-phospho-2'-deoxyribonucleoside-DNA + H(+). In terms of biological role, involved in base excision repair of DNA damaged by oxidation or by mutagenic agents. Acts as a DNA glycosylase that recognizes and removes damaged bases. Has a preference for oxidized purines, such as 7,8-dihydro-8-oxoguanine (8-oxoG). Has AP (apurinic/apyrimidinic) lyase activity and introduces nicks in the DNA strand. Cleaves the DNA backbone by beta-delta elimination to generate a single-strand break at the site of the removed base with both 3'- and 5'-phosphates. The protein is Formamidopyrimidine-DNA glycosylase of Psychromonas ingrahamii (strain DSM 17664 / CCUG 51855 / 37).